A 194-amino-acid chain; its full sequence is Phosphoheptose isomerase (194 aa).

In terms of domain architecture, SIS spans 37 to 194 (IAKSFKNKNK…IIEKEMKKIN (158 aa)). 52–54 (NGG) serves as a coordination point for substrate. The Zn(2+) site is built by His-61 and Glu-65. Residues Glu-65, 93 to 94 (ND), 119 to 121 (STS), Ser-124, and Gln-172 each bind substrate. Residues Gln-172 and His-180 each coordinate Zn(2+).

Belongs to the SIS family. GmhA subfamily. As to quaternary structure, homotetramer. Zn(2+) serves as cofactor.

Its subcellular location is the cytoplasm. It carries out the reaction 2 D-sedoheptulose 7-phosphate = D-glycero-alpha-D-manno-heptose 7-phosphate + D-glycero-beta-D-manno-heptose 7-phosphate. The protein operates within carbohydrate biosynthesis; D-glycero-D-manno-heptose 7-phosphate biosynthesis; D-glycero-alpha-D-manno-heptose 7-phosphate and D-glycero-beta-D-manno-heptose 7-phosphate from sedoheptulose 7-phosphate: step 1/1. In terms of biological role, catalyzes the isomerization of sedoheptulose 7-phosphate in D-glycero-D-manno-heptose 7-phosphate. This chain is Phosphoheptose isomerase, found in Buchnera aphidicola subsp. Schizaphis graminum (strain Sg).